Reading from the N-terminus, the 75-residue chain is MSGCNCGSSCNCGDQCKCNKRSGLSYVEAGETTETVVLGVGPTKIHFEGAEMSVAAEDGGCKCGSSCTCDPCNCK.

This sequence belongs to the metallothionein superfamily. Type 15 family.

Its function is as follows. Metallothioneins have a high content of cysteine residues that bind various heavy metals. The protein is Metallothionein-like protein 1 of Cicer arietinum (Chickpea).